Here is a 341-residue protein sequence, read N- to C-terminus: Small ribosomal subunit protein uS3 (341 aa).

Residues 38–106 (IRRMMTRGME…QVQLNILEVK (69 aa)) form the KH type-2 domain. 2 disordered regions span residues 224–246 (RAVR…LETA) and 274–341 (PAGQ…TKEG). Low complexity-rich tracts occupy residues 285 to 303 (AEQP…VTGE) and 311 to 333 (AAPA…DAPS).

Belongs to the universal ribosomal protein uS3 family. As to quaternary structure, part of the 30S ribosomal subunit. Forms a tight complex with proteins S10 and S14.

In terms of biological role, binds the lower part of the 30S subunit head. Binds mRNA in the 70S ribosome, positioning it for translation. This is Small ribosomal subunit protein uS3 from Acidothermus cellulolyticus (strain ATCC 43068 / DSM 8971 / 11B).